We begin with the raw amino-acid sequence, 59 residues long: MAVQQNRKTRSKRGMRRSHDALSAAALSTDATTGEVHRRHHVSPDGFYRGKQVVEARDE.

Residues 1–59 (MAVQQNRKTRSKRGMRRSHDALSAAALSTDATTGEVHRRHHVSPDGFYRGKQVVEARDE) form a disordered region. The span at 7-16 (RKTRSKRGMR) shows a compositional bias: basic residues. A compositionally biased stretch (low complexity) spans 21-33 (ALSAAALSTDATT).

Belongs to the bacterial ribosomal protein bL32 family.

The protein is Large ribosomal subunit protein bL32 of Marinobacter nauticus (strain ATCC 700491 / DSM 11845 / VT8) (Marinobacter aquaeolei).